The following is a 217-amino-acid chain: Vacuolar protein-sorting-associated protein 37 homolog 1 (217 aa).

Residues methionine 1–glutamine 49 form a disordered region. Over residues lysine 8–alanine 20 the composition is skewed to polar residues. Positions serine 21–serine 47 are enriched in low complexity. A VPS37 C-terminal domain is found at glutamine 137–isoleucine 217.

It belongs to the VPS37 family. Component of the endosomal sorting required for transport complex I (ESCRT-I), composed of ELC, VPS28 and VPS37. Interacts with ELC.

The protein localises to the endosome. Its function is as follows. Component of the ESCRT-I complex (endosomal sorting complex required for transport I), a regulator of vesicular trafficking process. Required for the sorting of endocytic ubiquitinated cargos into multivesicular bodies (MVBs). In Arabidopsis thaliana (Mouse-ear cress), this protein is Vacuolar protein-sorting-associated protein 37 homolog 1 (VPS37-1).